Reading from the N-terminus, the 102-residue chain is UPF0213 protein Ent638_3592 (102 aa).

Residues 4–79 enclose the GIY-YIG domain; that stretch reads VCWFLYLVRT…KQLTKRQKER (76 aa).

This sequence belongs to the UPF0213 family.

This is UPF0213 protein Ent638_3592 from Enterobacter sp. (strain 638).